The primary structure comprises 317 residues: Dehydrogenase/reductase SDR family member 12 (317 aa).

Positions 50 and 52 each coordinate NAD(+). Position 175 (S175) interacts with substrate. The NAD(+) site is built by Y201, K205, and T234. Catalysis depends on Y201, which acts as the Proton acceptor.

Belongs to the short-chain dehydrogenases/reductases (SDR) family.

Its function is as follows. Putative oxidoreductase. This is Dehydrogenase/reductase SDR family member 12 (DHRS12) from Bos taurus (Bovine).